The following is a 419-amino-acid chain: Phosphatidylcholine:ceramide cholinephosphotransferase 1 (419 aa).

The region spanning 13–76 (WSPKKVADWL…LDMIETLKME (64 aa)) is the SAM domain. Residue S14 is modified to Phosphoserine. A run of 5 helical transmembrane segments spans residues 142 to 162 (FLAF…ISVV), 190 to 210 (FSIC…QWLL), 221 to 241 (FFCI…VTTL), 282 to 302 (MCGD…YLFI), and 310 to 330 (LWWY…CILL). H291 is an active-site residue. The Cytoplasmic portion of the chain corresponds to 331 to 419 (AHDHYTVDVV…VKYSRLVNDT (89 aa)). Residues H334 and D338 contribute to the active site.

The protein belongs to the sphingomyelin synthase family. Isoform 1 is widely expressed, isoform 2 shows a more narrow distribution and isoform 3 is detected only in testis and heart.

The protein resides in the golgi apparatus membrane. The catalysed reaction is an N-acylsphing-4-enine + a 1,2-diacyl-sn-glycero-3-phosphocholine = a sphingomyelin + a 1,2-diacyl-sn-glycerol. It catalyses the reaction 1-(9Z-octadecenoyl)-2-acyl-sn-3-glycerol + a sphingomyelin = a 1-(9Z-octadecenoyl)-2-acyl-sn-glycero-3-phosphocholine + an N-acylsphing-4-enine. It carries out the reaction N-hexadecanoylsphinganine + a 1,2-diacyl-sn-glycero-3-phosphocholine = N-hexadecanoyl-sphinganine-1-phosphocholine + a 1,2-diacyl-sn-glycerol. The enzyme catalyses N-hexadecanoyl-(4R)-hydroxysphinganine + a 1,2-diacyl-sn-glycero-3-phosphocholine = N-hexadecanoyl-(4R)-hydroxysphinganine-phosphocholine + a 1,2-diacyl-sn-glycerol. The catalysed reaction is an N-acylsphing-4-enine + a 1,2-diacyl-sn-glycero-3-phosphoethanolamine = an N-acylsphing-4-enine 1-phosphoethanolamine + a 1,2-diacyl-sn-glycerol. The protein operates within sphingolipid metabolism. In terms of biological role, major sphingomyelin synthase at the Golgi apparatus. Catalyzes the reversible transfer of phosphocholine moiety in sphingomyelin biosynthesis: in the forward reaction transfers phosphocholine head group of phosphatidylcholine (PC) on to ceramide (CER) to form ceramide phosphocholine (sphingomyelin, SM) and diacylglycerol (DAG) as by-product, and in the reverse reaction transfers phosphocholine from SM to DAG to form PC and CER. The direction of the reaction depends on the levels of CER and DAG in Golgi membranes. Converts the newly synthesized CER, that is transported from the endoplasmic reticulum to the trans-Golgi by the Cer transport protein (CERT), to SM. Can form a heteromeric complex with glucosylceramide synthase (GCS) increasing SMS activity and reducing glucosylceramide synthesis, a critical mechanism that controls the metabolic fate of CER in the Golgi. Does not use free phosphorylcholine or CDP-choline as donor. Can also transfer phosphoethanolamine head group of phosphatidylethanolamine (PE) on to CER to form ceramide phosphoethanolamine (CPE). Regulates receptor-mediated signal transduction via mitogenic DAG and proapoptotic CER, as well as via SM, a structural component of membrane rafts that serve as platforms for signal transduction and protein sorting. Plays a role in secretory transport via regulation of DAG pool at the Golgi apparatus and its downstream effects on PRKD1. Its function is as follows. (Microbial infection) Contributes to the brain SM production for Japanese encephalitis virus attachment and infection. This is Phosphatidylcholine:ceramide cholinephosphotransferase 1 (Sgms1) from Mus musculus (Mouse).